Consider the following 346-residue polypeptide: 26S proteasome non-ATPase regulatory subunit 4 (346 aa).

A VWFA domain is found at 5–190 (STMICVDNSE…LTDALLQSSV (186 aa)). 2 UIM domains span residues 216-235 (ENDPDLALALRVSMEEERAR) and 273-292 (TEEQQLEWALRLSMQENAPA). The interval 290-346 (APAEQPQVQHEQMDVDGAPAVGGDNLDDLMNNPELLQQIVDDLPAANAEKDDDKEKK) is disordered. Residues 337–346 (AEKDDDKEKK) show a composition bias toward basic and acidic residues.

Belongs to the proteasome subunit S5A family. As to quaternary structure, the 26S proteasome is composed of a core protease, known as the 20S proteasome, capped at one or both ends by the 19S regulatory complex (RC). The RC is composed of at least 18 different subunits in two subcomplexes, the base and the lid, which form the portions proximal and distal to the 20S proteolytic core, respectively. Broadly expressed with high expression in the pharynx, intestine, hypodermis and spermatheca and weak expression in the excretory cell, body wall muscle, vulva and somatic gonad.

The protein localises to the cytoplasm. Its subcellular location is the nucleus. In terms of biological role, binds and presumably selects ubiquitin-conjugates for destruction. Required for protein degradation and ubiquitin-proteasome system (UBS) function and regulates proteasomal subunit expression. Involvement in UBS might be cell type specific. Regulator of the autophagy-lysosome pathway that may confer resistance to autophagy by regulating the expression of autophagy-related proteins such as lgg-1, and by regulating lysosome formation, possibly by modulating elt-2 activity. Required for fertility, sperm production, and sex determination through regulation of tra-2 protein. Plays a role in the elimination of paternal mitochondria in fertilized eggs. The sequence is that of 26S proteasome non-ATPase regulatory subunit 4 from Caenorhabditis elegans.